We begin with the raw amino-acid sequence, 39 residues long: Omega-theraphotoxin-Asp1a (39 aa).

3 cysteine pairs are disulfide-bonded: Cys4-Cys25, Cys8-Cys31, and Cys17-Cys36.

As to expression, expressed by the venom gland.

It is found in the secreted. In terms of biological role, toxin that inhibits voltage-gated calcium channels in rat cerebellar granule cells (IC(50)&lt;200 nM). Is lethal to cockroaches. The sequence is that of Omega-theraphotoxin-Asp1a from Aphonopelma sp. (American tarantula).